The following is a 357-amino-acid chain: Arginine kinase Met e 2 (357 aa).

In terms of domain architecture, Phosphagen kinase N-terminal spans 9–91; that stretch reads KLEAGFKKLE…FDPIIEDYHV (83 aa). 64–68 provides a ligand contact to L-arginine; that stretch reads GVGIY. The Phosphagen kinase C-terminal domain maps to 119–356; the sequence is FVISTRVRCG…LELIKIEKEM (238 aa). Residues 122 to 126 and H185 contribute to the ATP site; that span reads STRVR. E225 contributes to the L-arginine binding site. R229 serves as a coordination point for ATP. L-arginine is bound at residue C271. ATP is bound by residues 280–284 and 309–314; these read RASVH and RGTRGE. E314 is an L-arginine binding site.

Belongs to the ATP:guanido phosphotransferase family.

The catalysed reaction is L-arginine + ATP = N(omega)-phospho-L-arginine + ADP + H(+). Catalyzes the reversible transfer of high energy ATP gamma-phosphate group to L-arginine. The protein is Arginine kinase Met e 2 of Metapenaeus ensis (Greasyback shrimp).